The following is a 97-amino-acid chain: Aspartyl/glutamyl-tRNA(Asn/Gln) amidotransferase subunit C (97 aa).

This sequence belongs to the GatC family. Heterotrimer of A, B and C subunits.

It carries out the reaction L-glutamyl-tRNA(Gln) + L-glutamine + ATP + H2O = L-glutaminyl-tRNA(Gln) + L-glutamate + ADP + phosphate + H(+). The enzyme catalyses L-aspartyl-tRNA(Asn) + L-glutamine + ATP + H2O = L-asparaginyl-tRNA(Asn) + L-glutamate + ADP + phosphate + 2 H(+). In terms of biological role, allows the formation of correctly charged Asn-tRNA(Asn) or Gln-tRNA(Gln) through the transamidation of misacylated Asp-tRNA(Asn) or Glu-tRNA(Gln) in organisms which lack either or both of asparaginyl-tRNA or glutaminyl-tRNA synthetases. The reaction takes place in the presence of glutamine and ATP through an activated phospho-Asp-tRNA(Asn) or phospho-Glu-tRNA(Gln). The protein is Aspartyl/glutamyl-tRNA(Asn/Gln) amidotransferase subunit C of Prochlorococcus marinus (strain SARG / CCMP1375 / SS120).